A 400-amino-acid chain; its full sequence is Mu-type opioid receptor (400 aa).

Topologically, residues 1–68 are extracellular; the sequence is MDSSAVPTNA…CPPTGSPSMI (68 aa). N-linked (GlcNAc...) asparagine glycans are attached at residues Asn9, Asn12, Asn33, Asn40, and Asn48. A helical transmembrane segment spans residues 69–93; it reads TAITIMALYSIVCVVGLFGNFLVMY. The Cytoplasmic segment spans residues 94 to 106; the sequence is VIVRYTKMKTATN. The chain crosses the membrane as a helical span at residues 107 to 131; it reads IYIFNLALADALVTSTLPFQSVNYL. Over 132–142 the chain is Extracellular; sequence MGTWPFGTILC. Residues Cys142 and Cys219 are joined by a disulfide bond. A helical transmembrane segment spans residues 143–165; it reads KIVISIDYYNMSTSIFTLCTMSV. The Cytoplasmic segment spans residues 166–185; sequence DRYIAVCHPVKALDFRTPRN. Tyr168 bears the Phosphotyrosine mark. The chain crosses the membrane as a helical span at residues 186 to 207; sequence AKIINVCNWILSSAIGLPVMFM. Over 208–230 the chain is Extracellular; the sequence is ATTKYRQGSIDCTLTFSHPSWYW. Residues 231-255 traverse the membrane as a helical segment; sequence ENLLKICVFIFAFIMPVLIITVCYG. Residues 256-283 lie on the Cytoplasmic side of the membrane; that stretch reads LMILRLKSVRMLSGSKEKDRNLRRITRM. Residues 284–306 traverse the membrane as a helical segment; sequence VLVVVAVFIICWTPIHIYVIIKA. The Extracellular segment spans residues 307 to 314; that stretch reads LVTIPETT. The chain crosses the membrane as a helical span at residues 315–338; it reads FQTVSWHFCIALGYTNSCLNPVLY. An NPxxY; plays a role in stabilizing the activated conformation of the receptor motif is present at residues 334–338; that stretch reads NPVLY. Residues 339–400 are Cytoplasmic-facing; sequence AFLDEDFKRC…NLEAETAPLP (62 aa). Cys353 is lipidated: S-palmitoyl cysteine. The segment at 364 to 386 is disordered; sequence NSTRIRQNTRDHPSTANTVDRTN. Ser365 is modified (phosphoserine). Thr372 carries the post-translational modification Phosphothreonine. Residue Ser377 is modified to Phosphoserine. The residue at position 396 (Thr396) is a Phosphothreonine.

The protein belongs to the G-protein coupled receptor 1 family. In terms of assembly, forms homooligomers and heterooligomers with other GPCRs, such as OPRD1, OPRK1, OPRL1, NPFFR2, ADRA2A, SSTR2, CNR1 and CCR5 (probably in dimeric forms). Interacts with heterotrimeric G proteins; interaction with a heterotrimeric complex containing GNAI1, GNB1 and GNG2 stabilizes the active conformation of the receptor and increases its affinity for endomorphin-2, the synthetic opioid peptide DAMGO and for morphinan agonists. Interacts with PPL; the interaction disrupts agonist-mediated G-protein activation. Interacts (via C-terminus) with DNAJB4 (via C-terminus). Interacts with calmodulin; the interaction inhibits the constitutive activity of OPRM1; it abolishes basal and attenuates agonist-stimulated G-protein coupling. Interacts with FLNA, PLD2, RANBP9 and WLS and GPM6A. Interacts with RTP4. Interacts with SYP and GNAS. Interacts with RGS9, RGS17, RGS20, RGS4, PPP1R9B and HINT1. In terms of processing, phosphorylated. Differentially phosphorylated in basal and agonist-induced conditions. Agonist-mediated phosphorylation modulates receptor internalization. Phosphorylated by GRK2 in a agonist-dependent manner. Phosphorylation at Tyr-168 requires receptor activation, is dependent on non-receptor protein tyrosine kinase Src and results in a decrease in agonist efficacy by reducing G-protein coupling efficiency. Phosphorylated on tyrosine residues; the phosphorylation is involved in agonist-induced G-protein-independent receptor down-regulation. Phosphorylation at Ser-377 is involved in G-protein-dependent but not beta-arrestin-dependent activation of the ERK pathway. Ubiquitinated. A basal ubiquitination seems not to be related to degradation. Ubiquitination is increased upon formation of OPRM1:OPRD1 oligomers leading to proteasomal degradation; the ubiquitination is diminished by RTP4.

Its subcellular location is the cell membrane. The protein localises to the cell projection. It is found in the axon. The protein resides in the perikaryon. It localises to the dendrite. Its subcellular location is the endosome. Functionally, receptor for endogenous opioids such as beta-endorphin and endomorphin. Receptor for natural and synthetic opioids including morphine, heroin, DAMGO, fentanyl, etorphine, buprenorphin and methadone. Also activated by enkephalin peptides, such as Met-enkephalin or Met-enkephalin-Arg-Phe, with higher affinity for Met-enkephalin-Arg-Phe. Agonist binding to the receptor induces coupling to an inactive GDP-bound heterotrimeric G-protein complex and subsequent exchange of GDP for GTP in the G-protein alpha subunit leading to dissociation of the G-protein complex with the free GTP-bound G-protein alpha and the G-protein beta-gamma dimer activating downstream cellular effectors. The agonist- and cell type-specific activity is predominantly coupled to pertussis toxin-sensitive G(i) and G(o) G alpha proteins, GNAI1, GNAI2, GNAI3 and GNAO1, and to a lesser extent to pertussis toxin-insensitive G alpha proteins GNAZ and GNA15. They mediate an array of downstream cellular responses, including inhibition of adenylate cyclase activity and both N-type and L-type calcium channels, activation of inward rectifying potassium channels, mitogen-activated protein kinase (MAPK), phospholipase C (PLC), phosphoinositide/protein kinase (PKC), phosphoinositide 3-kinase (PI3K) and regulation of NF-kappa-B. Also couples to adenylate cyclase stimulatory G alpha proteins. The selective temporal coupling to G-proteins and subsequent signaling can be regulated by RGSZ proteins, such as RGS9, RGS17 and RGS4. Phosphorylation by members of the GPRK subfamily of Ser/Thr protein kinases and association with beta-arrestins is involved in short-term receptor desensitization. Beta-arrestins associate with the GPRK-phosphorylated receptor and uncouple it from the G-protein thus terminating signal transduction. The phosphorylated receptor is internalized through endocytosis via clathrin-coated pits which involves beta-arrestins. The activation of the ERK pathway occurs either in a G-protein-dependent or a beta-arrestin-dependent manner and is regulated by agonist-specific receptor phosphorylation. Acts as a class A G-protein coupled receptor (GPCR) which dissociates from beta-arrestin at or near the plasma membrane and undergoes rapid recycling. Receptor down-regulation pathways are varying with the agonist and occur dependent or independent of G-protein coupling. Endogenous ligands induce rapid desensitization, endocytosis and recycling. Heterooligomerization with other GPCRs can modulate agonist binding, signaling and trafficking properties. Involved in neurogenesis. The protein is Mu-type opioid receptor (OPRM1) of Macaca mulatta (Rhesus macaque).